A 391-amino-acid polypeptide reads, in one-letter code: Aspartate aminotransferase (391 aa).

L-aspartate is bound by residues Gly40 and Asn176. Lys236 is subject to N6-(pyridoxal phosphate)lysine. Arg366 serves as a coordination point for L-aspartate.

It belongs to the class-I pyridoxal-phosphate-dependent aminotransferase family. As to quaternary structure, homodimer. Requires pyridoxal 5'-phosphate as cofactor.

It localises to the cytoplasm. It catalyses the reaction L-aspartate + 2-oxoglutarate = oxaloacetate + L-glutamate. This is Aspartate aminotransferase (aspC) from Pyrococcus horikoshii (strain ATCC 700860 / DSM 12428 / JCM 9974 / NBRC 100139 / OT-3).